The following is a 337-amino-acid chain: Glycerol-3-phosphate dehydrogenase [NAD(P)+] (337 aa).

Residues Ser-12, Trp-13, and Lys-110 each contribute to the NADPH site. Residues Lys-110, Gly-141, and Ser-143 each coordinate sn-glycerol 3-phosphate. Position 145 (Ala-145) interacts with NADPH. Sn-glycerol 3-phosphate-binding residues include Lys-196, Asp-249, Ser-259, Arg-260, and Asn-261. Lys-196 (proton acceptor) is an active-site residue. Arg-260 lines the NADPH pocket. Val-284 and Glu-286 together coordinate NADPH.

Belongs to the NAD-dependent glycerol-3-phosphate dehydrogenase family.

Its subcellular location is the cytoplasm. It catalyses the reaction sn-glycerol 3-phosphate + NAD(+) = dihydroxyacetone phosphate + NADH + H(+). The enzyme catalyses sn-glycerol 3-phosphate + NADP(+) = dihydroxyacetone phosphate + NADPH + H(+). The protein operates within membrane lipid metabolism; glycerophospholipid metabolism. In terms of biological role, catalyzes the reduction of the glycolytic intermediate dihydroxyacetone phosphate (DHAP) to sn-glycerol 3-phosphate (G3P), the key precursor for phospholipid synthesis. The protein is Glycerol-3-phosphate dehydrogenase [NAD(P)+] of Levilactobacillus brevis (strain ATCC 367 / BCRC 12310 / CIP 105137 / JCM 1170 / LMG 11437 / NCIMB 947 / NCTC 947) (Lactobacillus brevis).